Reading from the N-terminus, the 750-residue chain is Photosystem I P700 chlorophyll a apoprotein A1 (750 aa).

8 helical membrane-spanning segments follow: residues 70-93 (VFSAHFGQLSIIFLWLSGMYFHGA), 156-179 (LYCTAIGALVFAALMLFAGWFHYH), 195-219 (LNHHLAGLLGLGSLSWAGHQVHVSL), 291-309 (IAHHHLAIAILFLIAGHMY), 346-369 (WHAQLSLNLAMLGSLTIVVAHHMY), 385-411 (LSLFTHHMWIGGFLIVGAAAHAAIFMV), 433-455 (AIISHLNWVCIFLGFHSFGLYIH), and 531-549 (FLVHHIHAFTIHVTVLILL). [4Fe-4S] cluster is bound by residues Cys-573 and Cys-582. 2 helical membrane passes run 589-610 (HVFLGLFWMYNAISVVIFHFSW) and 664-686 (LSAYGLFFLGAHFVWAFSLMFLF). Position 675 (His-675) interacts with chlorophyll a'. Chlorophyll a-binding residues include Met-683 and Tyr-691. Position 692 (Trp-692) interacts with phylloquinone. The chain crosses the membrane as a helical span at residues 724-744 (AVGVTHYLLGGIATTWAFFLA).

It belongs to the PsaA/PsaB family. The PsaA/B heterodimer binds the P700 chlorophyll special pair and subsequent electron acceptors. PSI consists of a core antenna complex that captures photons, and an electron transfer chain that converts photonic excitation into a charge separation. The eukaryotic PSI reaction center is composed of at least 11 subunits. The cofactor is P700 is a chlorophyll a/chlorophyll a' dimer, A0 is one or more chlorophyll a, A1 is one or both phylloquinones and FX is a shared 4Fe-4S iron-sulfur center..

The protein resides in the plastid. It localises to the chloroplast thylakoid membrane. It catalyses the reaction reduced [plastocyanin] + hnu + oxidized [2Fe-2S]-[ferredoxin] = oxidized [plastocyanin] + reduced [2Fe-2S]-[ferredoxin]. In terms of biological role, psaA and PsaB bind P700, the primary electron donor of photosystem I (PSI), as well as the electron acceptors A0, A1 and FX. PSI is a plastocyanin-ferredoxin oxidoreductase, converting photonic excitation into a charge separation, which transfers an electron from the donor P700 chlorophyll pair to the spectroscopically characterized acceptors A0, A1, FX, FA and FB in turn. Oxidized P700 is reduced on the lumenal side of the thylakoid membrane by plastocyanin. This chain is Photosystem I P700 chlorophyll a apoprotein A1, found in Lobularia maritima (Sweet alyssum).